A 171-amino-acid polypeptide reads, in one-letter code: 3-hydroxydecanoyl-[acyl-carrier-protein] dehydratase (171 aa).

Residue histidine 70 is part of the active site.

This sequence belongs to the thioester dehydratase family. FabA subfamily. Homodimer.

It is found in the cytoplasm. It catalyses the reaction a (3R)-hydroxyacyl-[ACP] = a (2E)-enoyl-[ACP] + H2O. It carries out the reaction (3R)-hydroxydecanoyl-[ACP] = (2E)-decenoyl-[ACP] + H2O. The enzyme catalyses (2E)-decenoyl-[ACP] = (3Z)-decenoyl-[ACP]. It participates in lipid metabolism; fatty acid biosynthesis. Necessary for the introduction of cis unsaturation into fatty acids. Catalyzes the dehydration of (3R)-3-hydroxydecanoyl-ACP to E-(2)-decenoyl-ACP and then its isomerization to Z-(3)-decenoyl-ACP. Can catalyze the dehydratase reaction for beta-hydroxyacyl-ACPs with saturated chain lengths up to 16:0, being most active on intermediate chain length. This Xanthomonas oryzae pv. oryzae (strain MAFF 311018) protein is 3-hydroxydecanoyl-[acyl-carrier-protein] dehydratase.